The sequence spans 270 residues: Small ribosomal subunit protein uS2 (270 aa).

Belongs to the universal ribosomal protein uS2 family. Component of the small ribosomal subunit. Mature ribosomes consist of a small (40S) and a large (60S) subunit. The 40S subunit contains about 33 different proteins and 1 molecule of RNA (18S). The 60S subunit contains about 49 different proteins and 3 molecules of RNA (28S, 5.8S and 5S). Interacts with oho23B/rpS21.

It localises to the cytoplasm. It is found in the nucleus. In terms of biological role, required for the assembly and/or stability of the 40S ribosomal subunit. Required for the processing of the 20S rRNA-precursor to mature 18S rRNA in a late step of the maturation of 40S ribosomal subunits. Required during oogenesis and imaginal development. The sequence is that of Small ribosomal subunit protein uS2 from Drosophila persimilis (Fruit fly).